Reading from the N-terminus, the 61-residue chain is Small ribosomal subunit protein uS14 (61 aa).

Residues C24, C27, C40, and C43 each contribute to the Zn(2+) site.

Belongs to the universal ribosomal protein uS14 family. Zinc-binding uS14 subfamily. In terms of assembly, part of the 30S ribosomal subunit. Contacts proteins S3 and S10. Requires Zn(2+) as cofactor.

Binds 16S rRNA, required for the assembly of 30S particles and may also be responsible for determining the conformation of the 16S rRNA at the A site. The chain is Small ribosomal subunit protein uS14 from Streptococcus equi subsp. zooepidemicus (strain H70).